A 476-amino-acid polypeptide reads, in one-letter code: Proline--tRNA ligase (476 aa).

Belongs to the class-II aminoacyl-tRNA synthetase family. ProS type 3 subfamily. Homodimer.

It localises to the cytoplasm. It carries out the reaction tRNA(Pro) + L-proline + ATP = L-prolyl-tRNA(Pro) + AMP + diphosphate. In terms of biological role, catalyzes the attachment of proline to tRNA(Pro) in a two-step reaction: proline is first activated by ATP to form Pro-AMP and then transferred to the acceptor end of tRNA(Pro). The chain is Proline--tRNA ligase from Rubrobacter xylanophilus (strain DSM 9941 / JCM 11954 / NBRC 16129 / PRD-1).